The sequence spans 83 residues: Cobrotoxin (83 aa).

The signal sequence occupies residues 1–21 (MKTLLLTLLVVTIVCLDLGYT). Disulfide bonds link cysteine 24/cysteine 45, cysteine 38/cysteine 62, cysteine 64/cysteine 75, and cysteine 76/cysteine 81.

It belongs to the three-finger toxin family. Short-chain subfamily. Type I alpha-neurotoxin sub-subfamily. Expressed by the venom gland.

The protein localises to the secreted. Functionally, binds to muscle nicotinic acetylcholine receptor (nAChR) and inhibit acetylcholine from binding to the receptor, thereby impairing neuromuscular transmission. Has a higher toxicity than cobrotoxin-b. In vivo, when tested on rat arthritis models, shows anti-inflammation and immunosuppression effects. The polypeptide is Cobrotoxin (Naja atra (Chinese cobra)).